The following is a 196-amino-acid chain: GTP cyclohydrolase-2 (196 aa).

Residue 49–53 (RVHSE) participates in GTP binding. Positions 54, 65, and 67 each coordinate Zn(2+). GTP-binding positions include Q70, 92–94 (EGR), and T114. D126 (proton acceptor) is an active-site residue. R128 serves as the catalytic Nucleophile. T149 and K154 together coordinate GTP.

Belongs to the GTP cyclohydrolase II family. Homodimer. Zn(2+) serves as cofactor.

It catalyses the reaction GTP + 4 H2O = 2,5-diamino-6-hydroxy-4-(5-phosphoribosylamino)-pyrimidine + formate + 2 phosphate + 3 H(+). Its pathway is cofactor biosynthesis; riboflavin biosynthesis; 5-amino-6-(D-ribitylamino)uracil from GTP: step 1/4. In terms of biological role, catalyzes the conversion of GTP to 2,5-diamino-6-ribosylamino-4(3H)-pyrimidinone 5'-phosphate (DARP), formate and pyrophosphate. This chain is GTP cyclohydrolase-2, found in Salmonella choleraesuis (strain SC-B67).